The sequence spans 201 residues: Large ribosomal subunit protein uL4 (201 aa).

Residues 45–71 (AQKTRAEVTGSGKKPWRQKGTGRARAG) form a disordered region.

Belongs to the universal ribosomal protein uL4 family. Part of the 50S ribosomal subunit.

Functionally, one of the primary rRNA binding proteins, this protein initially binds near the 5'-end of the 23S rRNA. It is important during the early stages of 50S assembly. It makes multiple contacts with different domains of the 23S rRNA in the assembled 50S subunit and ribosome. In terms of biological role, forms part of the polypeptide exit tunnel. This is Large ribosomal subunit protein uL4 from Shewanella oneidensis (strain ATCC 700550 / JCM 31522 / CIP 106686 / LMG 19005 / NCIMB 14063 / MR-1).